Consider the following 152-residue polypeptide: Ribosomal RNA large subunit methyltransferase H (152 aa).

S-adenosyl-L-methionine contacts are provided by residues Leu-65, Gly-96, and 115–120; that span reads LGPMTW.

This sequence belongs to the RNA methyltransferase RlmH family. As to quaternary structure, homodimer.

Its subcellular location is the cytoplasm. The catalysed reaction is pseudouridine(1915) in 23S rRNA + S-adenosyl-L-methionine = N(3)-methylpseudouridine(1915) in 23S rRNA + S-adenosyl-L-homocysteine + H(+). Specifically methylates the pseudouridine at position 1915 (m3Psi1915) in 23S rRNA. In Gluconacetobacter diazotrophicus (strain ATCC 49037 / DSM 5601 / CCUG 37298 / CIP 103539 / LMG 7603 / PAl5), this protein is Ribosomal RNA large subunit methyltransferase H.